Here is a 714-residue protein sequence, read N- to C-terminus: DNA ligase (714 aa).

Residues 59 to 63, 108 to 109, and glutamate 139 contribute to the NAD(+) site; these read DYEYD and SL. Lysine 141 functions as the N6-AMP-lysine intermediate in the catalytic mechanism. Arginine 162, glutamate 200, lysine 325, and lysine 349 together coordinate NAD(+). Zn(2+) is bound by residues cysteine 443, cysteine 446, cysteine 461, and cysteine 466. The BRCT domain occupies 624-713; sequence VVENIFEGKT…IPDDLKDKVH (90 aa).

It belongs to the NAD-dependent DNA ligase family. LigA subfamily. It depends on Mg(2+) as a cofactor. Requires Mn(2+) as cofactor.

The enzyme catalyses NAD(+) + (deoxyribonucleotide)n-3'-hydroxyl + 5'-phospho-(deoxyribonucleotide)m = (deoxyribonucleotide)n+m + AMP + beta-nicotinamide D-nucleotide.. DNA ligase that catalyzes the formation of phosphodiester linkages between 5'-phosphoryl and 3'-hydroxyl groups in double-stranded DNA using NAD as a coenzyme and as the energy source for the reaction. It is essential for DNA replication and repair of damaged DNA. This chain is DNA ligase, found in Persephonella marina (strain DSM 14350 / EX-H1).